Consider the following 261-residue polypeptide: Hemin import ATP-binding protein HmuV (261 aa).

In terms of domain architecture, ABC transporter spans 3–239 (LDAADITVKL…AILSQAYGCA (237 aa)). ATP is bound at residue 35 to 42 (GPNGSGKT).

The protein belongs to the ABC transporter superfamily. Heme (hemin) importer (TC 3.A.1.14.5) family. As to quaternary structure, the complex is composed of two ATP-binding proteins (HmuV), two transmembrane proteins (HmuU) and a solute-binding protein (HmuT).

Its subcellular location is the cell inner membrane. In terms of biological role, part of the ABC transporter complex HmuTUV involved in hemin import. Responsible for energy coupling to the transport system. This chain is Hemin import ATP-binding protein HmuV, found in Roseobacter denitrificans (strain ATCC 33942 / OCh 114) (Erythrobacter sp. (strain OCh 114)).